The following is a 191-amino-acid chain: MSKHAAVESDEHVAERTAEAARQVERLTRWHDDFPTPGVRFADLTPVFADAEGFRSVIESLAACAPDADLVAGVDARGFLLGAGVAATLGTGVLAVRKGGKLPPPVISREYSLEYGSAALEIPGNGVELRGRRVLLLDDVLATGGTLAAAAHLFVEAGAQVVAAAVVLELEFLGGRARQGDYPLTSILRLP.

It belongs to the purine/pyrimidine phosphoribosyltransferase family. Homodimer.

The protein resides in the cytoplasm. It carries out the reaction AMP + diphosphate = 5-phospho-alpha-D-ribose 1-diphosphate + adenine. The protein operates within purine metabolism; AMP biosynthesis via salvage pathway; AMP from adenine: step 1/1. Its function is as follows. Catalyzes a salvage reaction resulting in the formation of AMP, that is energically less costly than de novo synthesis. The sequence is that of Adenine phosphoribosyltransferase from Nocardia farcinica (strain IFM 10152).